The primary structure comprises 309 residues: Wall-associated proteinase (309 aa).

Residues Asn-190 and Asn-295 are each glycosylated (N-linked (GlcNAc...) asparagine).

It localises to the secreted. Its subcellular location is the cell wall. The protein localises to the membrane. Its function is as follows. May participate in wall plasticization and/or intussusception or in cell wall turnover. This Coccidioides posadasii (strain RMSCC 757 / Silveira) (Valley fever fungus) protein is Wall-associated proteinase.